The chain runs to 217 residues: Ubiquitin-conjugating enzyme E2 1 (217 aa).

A UBC core domain is found at 4 to 151; sequence NRSRRIAKEL…AREWTSSYAA (148 aa). Cysteine 89 acts as the Glycyl thioester intermediate in catalysis.

The protein belongs to the ubiquitin-conjugating enzyme family.

It localises to the cytoplasm. The protein localises to the nucleus. It carries out the reaction S-ubiquitinyl-[E1 ubiquitin-activating enzyme]-L-cysteine + [E2 ubiquitin-conjugating enzyme]-L-cysteine = [E1 ubiquitin-activating enzyme]-L-cysteine + S-ubiquitinyl-[E2 ubiquitin-conjugating enzyme]-L-cysteine.. It participates in protein modification; protein ubiquitination. Catalyzes the covalent attachment of ubiquitin to other proteins. Functions in degradation of misfolded or regulated proteins localized in the endoplasmic reticulum (ER) lumen or membrane via the ubiquitin-proteasome system. Cognate E2 conjugating enzyme for the HRD1 ubiquitin ligase complex, which is part of the ERAD-L and ERAD-M pathways responsible for the rapid degradation of soluble lumenal and membrane proteins with misfolded lumenal domains (ERAD-L), or ER-membrane proteins with misfolded transmembrane domains (ERAD-M). The chain is Ubiquitin-conjugating enzyme E2 1 (ubc1) from Schizosaccharomyces pombe (strain 972 / ATCC 24843) (Fission yeast).